The chain runs to 312 residues: Malate dehydrogenase (312 aa).

NAD(+) is bound by residues 7-13 and aspartate 34; that span reads GAAGGIG. Substrate-binding residues include arginine 81 and arginine 87. NAD(+) is bound by residues asparagine 94 and 117–119; that span reads ITN. Positions 119 and 153 each coordinate substrate. Histidine 177 acts as the Proton acceptor in catalysis. NAD(+) is bound at residue methionine 227.

The protein belongs to the LDH/MDH superfamily. MDH type 1 family. Homodimer.

It catalyses the reaction (S)-malate + NAD(+) = oxaloacetate + NADH + H(+). In terms of biological role, catalyzes the reversible oxidation of malate to oxaloacetate. The protein is Malate dehydrogenase of Salmonella newport (strain SL254).